Reading from the N-terminus, the 188-residue chain is dCTP deaminase (188 aa).

Residues 111 to 116 (KSTYAR), 135 to 137 (TLE), glutamine 156, tyrosine 170, and glutamine 180 each bind dCTP. Glutamate 137 functions as the Proton donor/acceptor in the catalytic mechanism.

The protein belongs to the dCTP deaminase family. Homotrimer.

The catalysed reaction is dCTP + H2O + H(+) = dUTP + NH4(+). Its pathway is pyrimidine metabolism; dUMP biosynthesis; dUMP from dCTP (dUTP route): step 1/2. In terms of biological role, catalyzes the deamination of dCTP to dUTP. The sequence is that of dCTP deaminase from Legionella pneumophila (strain Paris).